The primary structure comprises 592 residues: Craniofacial development protein 2 (592 aa).

A compositionally biased stretch (basic and acidic residues) spans 1–16; sequence MEEFDSKDISTSKDED. 2 disordered regions span residues 1–225 and 499–592; these read MEEF…KGQS and VTNE…DCNN. Residues 25–42 show a composition bias toward acidic residues; it reads HEDDINELVKEDEVDGEE. Composition is skewed to basic and acidic residues over residues 78-108 and 147-162; these read SRESGGRIIEKEDAAAEQEKGAESEDARQEE and KVEELEKPKKAEEVKL. Polar residues predominate over residues 175 to 184; sequence LTQQGRLSGR. Basic and acidic residues-rich tracts occupy residues 185-207, 508-523, 552-562, and 580-592; these read TSEDEPRRSEGVQHATGEERRAD, EEAKSVLKQNEKEKPE, SVFKQDEKDKP, and EKCDLEKKKDCNN. Residues 499–578 are hydrophilic; sequence VTNEEDATNE…SVPSLPAGSG (80 aa).

Phosphorylated by CK2 (casein kinase II) in vitro. Expressed in liver and lung with higher expression in brain.

The protein localises to the cytoplasm. Its subcellular location is the nucleus. The polypeptide is Craniofacial development protein 2 (CFDP2) (Bos taurus (Bovine)).